Consider the following 112-residue polypeptide: Inner membrane assembly complex subunit 17 (112 aa).

A mitochondrion-targeting transit peptide spans M1–F24. Residues N25–P44 lie on the Mitochondrial matrix side of the membrane. Residues L45–V62 traverse the membrane as a helical segment. The Mitochondrial intermembrane segment spans residues W63 to I112.

It belongs to the INA17 family. As to quaternary structure, component of the inner membrane assembly (INA) complex. Interacts with a subset of F(1)F(0)-ATP synthase subunits of the F(1)-domain and the peripheral stalk.

It localises to the mitochondrion inner membrane. Functionally, component of the INA complex (INAC) that promotes the biogenesis of mitochondrial F(1)F(0)-ATP synthase. INAC facilitates the assembly of the peripheral stalk and promotes the assembly of the catalytic F(1)-domain with the membrane-embedded F(0)-domain. This Schizosaccharomyces pombe (strain 972 / ATCC 24843) (Fission yeast) protein is Inner membrane assembly complex subunit 17.